The following is a 3259-amino-acid chain: Striated muscle-specific serine/threonine-protein kinase (3259 aa).

A disordered region spans residues 1-30; the sequence is MQKARGTRGEDAGTRAPPSPGVPPKRAKVG. An Omega-N-methylarginine modification is found at Arg33. Residues 45–126 form the Ig-like 1 domain; the sequence is PVFLRPLKNA…GKASCEAVLT (82 aa). At Ser141 the chain carries Phosphoserine. Disordered stretches follow at residues 155–185, 198–226, 278–716, and 816–880; these read RAFS…TSEE, EQEA…GPRH, PSGL…DDSY, and VRPG…KVSL. Positions 158–185 are enriched in polar residues; that stretch reads STPTGGSDTLVGTSLDTPPTSVTGTSEE. Residues 301-317 show a composition bias toward pro residues; the sequence is PALPPPSKSALLPPPSP. Ser368 and Ser375 each carry phosphoserine. Thr379 carries the post-translational modification Phosphothreonine. 2 positions are modified to phosphoserine: Ser382 and Ser385. Basic and acidic residues predominate over residues 404–422; it reads ILDKLQFFEERRRSLERSD. The residue at position 423 (Ser423) is a Phosphoserine. Thr453 is subject to Phosphothreonine. Phosphoserine is present on residues Ser457, Ser463, Ser493, Ser511, Ser531, and Ser554. Positions 459–473 are enriched in basic and acidic residues; the sequence is EELRSPRGSVAERRR. A compositionally biased stretch (basic and acidic residues) spans 510 to 522; that stretch reads TSREELVRSHESL. Basic and acidic residues-rich tracts occupy residues 624-638 and 663-680; these read PESR…KREP and EKNR…RGPE. The Ig-like 2 domain maps to 727–817; that stretch reads PVFEIPLQNM…ASCASSLAVR (91 aa). The span at 820 to 830 shows a compositional bias: polar residues; sequence ASTSPFSSPIT. 3 Ig-like domains span residues 874-963, 968-1056, and 1069-1157; these read PTFK…ARLE, PESR…DELT, and PLFT…AQLY. Cysteines 994 and 1046 form a disulfide. 2 positions are modified to phosphoserine: Ser1133 and Ser1177. A disordered region spans residues 1162–1185; the sequence is RTAASGPSSKLEKMPSIPEEPEHG. The 91-residue stretch at 1193–1283 folds into the Ig-like 6 domain; sequence PDFLRPLQDL…AACYAHLYVT (91 aa). One can recognise a Fibronectin type-III 1 domain in the interval 1290–1387; the sequence is PDGAPQVVAV…PSEPVQLLEH (98 aa). The span at 1367-1379 shows a compositional bias: low complexity; it reads SSGKSSSKPSAPS. The disordered stretch occupies residues 1367-1386; the sequence is SSGKSSSKPSAPSEPVQLLE. Residues 1490 to 1578 form the Ig-like 7 domain; that stretch reads PRFESIMEDV…GEVSCKAELS (89 aa). A Protein kinase 1 domain is found at 1606–1859; that stretch reads YDIHQEIGRG…AEETLEHPWF (254 aa). ATP-binding positions include 1612-1620 and Lys1635; that span reads IGRGAFSYL. The active-site Proton acceptor is the Asp1724. Disordered stretches follow at residues 1913–2244, 2336–2451, and 2463–2562; these read MPRR…QMPA, AKFK…SPVL, and RLSS…SQPN. Positions 1918–1927 are enriched in low complexity; the sequence is PPSGGLSSSS. 5 positions are modified to phosphoserine: Ser1993, Ser2004, Ser2019, Ser2020, and Ser2042. Over residues 2009–2019 the composition is skewed to basic and acidic residues; it reads SPRRPELRRGS. Residue Arg2060 is modified to Asymmetric dimethylarginine; alternate. At Arg2060 the chain carries Omega-N-methylarginine; alternate. A compositionally biased stretch (low complexity) spans 2069–2081; it reads AQRLQALRQRLLR. A phosphoserine mark is found at Ser2114 and Ser2135. Position 2144 is an omega-N-methylarginine (Arg2144). Residues 2168 to 2179 are compositionally biased toward polar residues; the sequence is ESPSLSALSETQ. Over residues 2180 to 2189 the composition is skewed to pro residues; it reads PPSPALPSAP. Ser2182 and Ser2207 each carry phosphoserine. Polar residues predominate over residues 2193 to 2207; the sequence is ITKSPEPSAATSRDS. Positions 2208–2218 are enriched in pro residues; that stretch reads PQPPAPQPVPE. A compositionally biased stretch (basic and acidic residues) spans 2219–2229; it reads KIPEPKPEPVR. A compositionally biased stretch (low complexity) spans 2230–2244; the sequence is AAKPAQPPLALQMPA. Residues 2336-2345 are compositionally biased toward basic and acidic residues; that stretch reads AKFKRSRESP. Residues 2346–2355 are compositionally biased toward low complexity; it reads LSRGLRLLSR. Over residues 2356 to 2372 the composition is skewed to basic and acidic residues; it reads SRSEERGPFRGAEDDGI. Ser2376 carries the phosphoserine modification. Thr2380 is subject to Phosphothreonine. Residues 2384–2395 are compositionally biased toward basic and acidic residues; that stretch reads LVRRPERSRSVQ. Phosphoserine occurs at positions 2410, 2414, 2438, 2439, 2444, and 2448. Low complexity predominate over residues 2463 to 2484; the sequence is RLSSRLQRSGSSEDSGGASGRS. The span at 2510–2520 shows a compositional bias: polar residues; sequence QLASQTGATTP. Phosphoserine is present on residues Ser2521 and Ser2524. Residues 2521–2540 show a composition bias toward low complexity; the sequence is SAESLGSEASGTSGSSAPGE. Residues 2543–2554 show a composition bias toward basic residues; sequence SRHRWGLSRLRK. Ser2559 carries the phosphoserine modification. The Ig-like 8 domain maps to 2583-2673; the sequence is PPVFHIKLKD…GSITSSCTVA (91 aa). Residues Cys2605 and Cys2657 are joined by a disulfide bond. In terms of domain architecture, Fibronectin type-III 2 spans 2680 to 2774; that stretch reads KLAPPEVPQT…KVFIRGTQDS (95 aa). Position 2771 is a phosphothreonine (Thr2771). Disordered regions lie at residues 2771 to 2829 and 2855 to 2957; these read TQDS…MSAN and TQQA…PQKP. Ser2774 carries the post-translational modification Phosphoserine. The span at 2793–2810 shows a compositional bias: pro residues; sequence RAPPPDSPTSLVPTPPLA. A compositionally biased stretch (low complexity) spans 2814–2828; that stretch reads SQASTLSPSTSSMSA. Residues 2859–2965 form the Fibronectin type-III 3 domain; it reads EPSPPSILVT…KPYTFLEEKA (107 aa). A compositionally biased stretch (polar residues) spans 2880–2907; that stretch reads GTLTPTSSPQGVKPAPSSSSLYMVTSFV. A compositionally biased stretch (pro residues) spans 2910-2924; sequence PPDPQPPAPEPPPEP. Positions 2940 to 2950 are enriched in polar residues; sequence SSPTPESTTLR. Phosphoserine is present on Ser2941. One can recognise a Protein kinase 2 domain in the interval 2958-3210; sequence YTFLEEKARG…LQDCLAHPWL (253 aa). Residues 2964 to 2972 and Lys2987 contribute to the ATP site; that span reads KARGRFGVV. The active-site Proton acceptor is Asp3077.

This sequence belongs to the protein kinase superfamily. CAMK Ser/Thr protein kinase family. In terms of assembly, interacts with MTM1. May be autophosphorylated. As to expression, isoform 2 is highly expressed in differentiated arterial smooth muscle cells (ASMC) in the medial layer of the aorta. Weakly detected in brain and testis and to a lesser extent in organs rich in striated muscle or visceral smooth muscle.

It localises to the nucleus. The catalysed reaction is L-seryl-[protein] + ATP = O-phospho-L-seryl-[protein] + ADP + H(+). The enzyme catalyses L-threonyl-[protein] + ATP = O-phospho-L-threonyl-[protein] + ADP + H(+). In terms of biological role, isoform 2 may have a role in regulating the growth and differentiation of arterial smooth muscle cells. The chain is Striated muscle-specific serine/threonine-protein kinase (Speg) from Rattus norvegicus (Rat).